The following is a 173-amino-acid chain: Alpha-crystallin A chain (173 aa).

Residue Met1 is modified to N-acetylmethionine. Residues Leu52–Ser162 form the sHSP domain. Zn(2+) contacts are provided by His100, Glu102, His107, and His154. The segment at Pro144–Ser173 is disordered. Over residues Ser153 to Pro167 the composition is skewed to basic and acidic residues. Residue Ser162 is glycosylated (O-linked (GlcNAc) serine).

This sequence belongs to the small heat shock protein (HSP20) family. As to quaternary structure, heteropolymer composed of three CRYAA and one CRYAB subunits. Inter-subunit bridging via zinc ions enhances stability, which is crucial as there is no protein turn over in the lens. Can also form homodimers and homotetramers (dimers of dimers) which serve as the building blocks of homooligomers. Within homooligomers, the zinc-binding motif is created from residues of 3 different molecules. His-100 and Glu-102 from one molecule are ligands of the zinc ion, and His-107 and His-154 residues from additional molecules complete the site with tetrahedral coordination geometry.

The protein localises to the cytoplasm. Its subcellular location is the nucleus. In terms of biological role, contributes to the transparency and refractive index of the lens. May act as a chaperone, preventing aggregation of various proteins under a wide range of stress conditions. The sequence is that of Alpha-crystallin A chain (CRYAA) from Tupinambis teguixin (Golden tegu).